The following is a 337-amino-acid chain: Inositol 2-dehydrogenase (337 aa).

This sequence belongs to the Gfo/Idh/MocA family. In terms of assembly, homotetramer.

It carries out the reaction myo-inositol + NAD(+) = scyllo-inosose + NADH + H(+). Involved in the oxidation of myo-inositol (MI) to 2-keto-myo-inositol (2KMI or 2-inosose). This is Inositol 2-dehydrogenase from Gluconacetobacter diazotrophicus (strain ATCC 49037 / DSM 5601 / CCUG 37298 / CIP 103539 / LMG 7603 / PAl5).